The chain runs to 152 residues: UPF0735 ACT domain-containing protein CTC_00116 (152 aa).

The ACT domain maps to Ile76–Met151.

Belongs to the UPF0735 family.

The protein is UPF0735 ACT domain-containing protein CTC_00116 of Clostridium tetani (strain Massachusetts / E88).